The chain runs to 275 residues: Adenylate kinase (275 aa).

54 to 59 serves as a coordination point for ATP; the sequence is GAGKGT. Positions 74-103 are NMP; sequence ATGDMLRSQVAKKTPLGREAKKIMDQGGLV. Residues Thr75, Arg80, 101–103, 130–133, and Gln137 each bind AMP; these read GLV and GFPR. The LID stretch occupies residues 171 to 208; sequence GRLVHPASGRSYHRVFNPPKADMKDDITGEPLVSRSDD. Residues Arg172 and 181–182 each bind ATP; that span reads SY. Positions 205 and 216 each coordinate AMP. Gln244 contacts ATP.

Belongs to the adenylate kinase family. AK2 subfamily. Monomer.

It is found in the cytoplasm. It localises to the cytosol. Its subcellular location is the mitochondrion intermembrane space. The enzyme catalyses AMP + ATP = 2 ADP. Functionally, catalyzes the reversible transfer of the terminal phosphate group between ATP and AMP. Plays an important role in cellular energy homeostasis and in adenine nucleotide metabolism. Adenylate kinase activity is critical for regulation of the phosphate utilization and the AMP de novo biosynthesis pathways. The chain is Adenylate kinase (adk1) from Botryotinia fuckeliana (strain B05.10) (Noble rot fungus).